Here is a 243-residue protein sequence, read N- to C-terminus: Venom peptide isomerase heavy chain (243 aa).

The Peptidase S1 domain maps to 1-243 (IVGGKTAKFG…YTNWMSKNMV (243 aa)). Cysteine 31 and cysteine 47 are oxidised to a cystine. Active-site charge relay system residues include histidine 46 and aspartate 96. Asparagine 127 carries an N-linked (GlcNAc...) asparagine glycan. Intrachain disulfides connect cysteine 159/cysteine 181 and cysteine 190/cysteine 219. Residue serine 194 is the Charge relay system of the active site.

This sequence belongs to the peptidase S1 family. Heterodimer with venom peptide isomerase light chain; disulfide-linked. N-linked glycan at Asn-127 consists of Man3-GlcNAc2-Fuc. Expressed by the venom gland.

The protein localises to the secreted. In terms of biological role, peptide isomerase that inverts the chirality at the Ser-81 of omega-Aga IVB. Acts cofactor-independently. The chain is Venom peptide isomerase heavy chain from Agelenopsis aperta (North American funnel-web spider).